Consider the following 300-residue polypeptide: Nuclear egress protein 1 (300 aa).

A CCCH-type zinc finger spans residues 90-217 (CLSLSGMGYY…YIVFPGKALH (128 aa)).

Belongs to the herpesviridae NEC1 protein family. Forms a heterohexameric complex with NEC2. Interacts with capsid vertex specific component 2/CVC2; this interaction directs the capsid to the host inner nuclear membrane to initiate budding. In terms of processing, phosphorylated at serine residues in the N-terminus. This phosphorylation regulates the localization within the inner nuclear membrane.

The protein localises to the host nucleus inner membrane. Plays an essential role in virion nuclear egress, the first step of virion release from infected cell. Within the host nucleus, NEC1 interacts with the newly formed capsid through the vertexes and directs it to the inner nuclear membrane by associating with NEC2. Induces the budding of the capsid at the inner nuclear membrane as well as its envelopment into the perinuclear space. There, the NEC1/NEC2 complex promotes the fusion of the enveloped capsid with the outer nuclear membrane and the subsequent release of the viral capsid into the cytoplasm where it will reach the secondary budding sites in the host Golgi or trans-Golgi network. The sequence is that of Nuclear egress protein 1 from Gallid herpesvirus 2 (strain Chicken/Md5/ATCC VR-987) (GaHV-2).